The chain runs to 369 residues: Phenylalanine--tRNA ligase alpha subunit (369 aa).

Glu269 lines the Mg(2+) pocket.

The protein belongs to the class-II aminoacyl-tRNA synthetase family. Phe-tRNA synthetase alpha subunit type 1 subfamily. As to quaternary structure, tetramer of two alpha and two beta subunits. It depends on Mg(2+) as a cofactor.

The protein resides in the cytoplasm. The enzyme catalyses tRNA(Phe) + L-phenylalanine + ATP = L-phenylalanyl-tRNA(Phe) + AMP + diphosphate + H(+). The chain is Phenylalanine--tRNA ligase alpha subunit from Brucella ovis (strain ATCC 25840 / 63/290 / NCTC 10512).